The chain runs to 489 residues: UBX domain-containing protein 7 (489 aa).

Residue A2 is modified to N-acetylalanine. Residues 2–54 (AAHGGSAASSALKGLIQQFTTITGASESVGKHMLEACNNNLEMAVTMFLDGGG) enclose the UBA domain. Residues 56 to 77 (AEEPSTSSASVSTVRPHTEEEV) are disordered. The span at 59–70 (PSTSSASVSTVR) shows a compositional bias: polar residues. Residue K84 forms a Glycyl lysine isopeptide (Lys-Gly) (interchain with G-Cter in SUMO2) linkage. K99 is covalently cross-linked (Glycyl lysine isopeptide (Lys-Gly) (interchain with G-Cter in ubiquitin)). A Glycyl lysine isopeptide (Lys-Gly) (interchain with G-Cter in SUMO2) cross-link involves residue K134. A phosphoserine mark is found at S278, S280, S285, and S288. The 20-residue stretch at 285-304 (SEDSQLEAAIRASLQETHFD) folds into the UIM domain. Residues 300–309 (ETHFDSTQTK) show a composition bias toward polar residues. The segment at 300-384 (ETHFDSTQTK…PGTATNHQGL (85 aa)) is disordered. Position 306 is a phosphothreonine (T306). Residues 352 to 366 (HKDLGHRKEENRRPL) show a composition bias toward basic and acidic residues. The UBX domain occupies 408-485 (VNGPKAQLML…GLCPQETVFV (78 aa)).

As to quaternary structure, interacts with neddylated CUL2, ubiquitinated HIF1A, and VCP/p97.

The protein resides in the nucleus. Its function is as follows. Ubiquitin-binding adapter that links a subset of NEDD8-associated cullin ring ligases (CRLs) to the segregase VCP/p97, to regulate turnover of their ubiquitination substrates. The chain is UBX domain-containing protein 7 (UBXN7) from Homo sapiens (Human).